The following is a 495-amino-acid chain: Cytochrome P450 monooxygenase 88 (495 aa).

The helical transmembrane segment at 2–22 (FLQIVTSVLATGLLYALISVL) threads the bilayer. Residues Asn25 and Asn198 are each glycosylated (N-linked (GlcNAc...) asparagine). Position 428 (Cys428) interacts with heme.

The protein belongs to the cytochrome P450 family. It depends on heme as a cofactor.

The protein resides in the membrane. The protein operates within secondary metabolite biosynthesis. Its function is as follows. Cytochrome P450 monooxygenase that is able to use 4-ethoxybenzoic acid as a substrate for oxidation. This is Cytochrome P450 monooxygenase 88 from Postia placenta (strain ATCC 44394 / Madison 698-R) (Brown rot fungus).